Consider the following 149-residue polypeptide: Transcription antitermination protein NusB (149 aa).

The protein belongs to the NusB family.

Involved in transcription antitermination. Required for transcription of ribosomal RNA (rRNA) genes. Binds specifically to the boxA antiterminator sequence of the ribosomal RNA (rrn) operons. In Sphingopyxis alaskensis (strain DSM 13593 / LMG 18877 / RB2256) (Sphingomonas alaskensis), this protein is Transcription antitermination protein NusB.